Reading from the N-terminus, the 213-residue chain is Histidine biosynthesis bifunctional protein HisIE (213 aa).

The tract at residues 1-114 (MLTTEKYQGL…FHPALTDFSF (114 aa)) is phosphoribosyl-AMP cyclohydrolase. The segment at 115–213 (LFQLENIISI…RVRSKLKKKH (99 aa)) is phosphoribosyl-ATP pyrophosphohydrolase.

It in the N-terminal section; belongs to the PRA-CH family. This sequence in the C-terminal section; belongs to the PRA-PH family.

Its subcellular location is the cytoplasm. It carries out the reaction 1-(5-phospho-beta-D-ribosyl)-ATP + H2O = 1-(5-phospho-beta-D-ribosyl)-5'-AMP + diphosphate + H(+). The enzyme catalyses 1-(5-phospho-beta-D-ribosyl)-5'-AMP + H2O = 1-(5-phospho-beta-D-ribosyl)-5-[(5-phospho-beta-D-ribosylamino)methylideneamino]imidazole-4-carboxamide. It functions in the pathway amino-acid biosynthesis; L-histidine biosynthesis; L-histidine from 5-phospho-alpha-D-ribose 1-diphosphate: step 2/9. The protein operates within amino-acid biosynthesis; L-histidine biosynthesis; L-histidine from 5-phospho-alpha-D-ribose 1-diphosphate: step 3/9. The sequence is that of Histidine biosynthesis bifunctional protein HisIE from Blochmanniella floridana.